Consider the following 231-residue polypeptide: Large ribosomal subunit protein uL1 (231 aa).

Belongs to the universal ribosomal protein uL1 family. As to quaternary structure, part of the 50S ribosomal subunit.

Its function is as follows. Binds directly to 23S rRNA. The L1 stalk is quite mobile in the ribosome, and is involved in E site tRNA release. Functionally, protein L1 is also a translational repressor protein, it controls the translation of the L11 operon by binding to its mRNA. This chain is Large ribosomal subunit protein uL1, found in Cupriavidus pinatubonensis (strain JMP 134 / LMG 1197) (Cupriavidus necator (strain JMP 134)).